The chain runs to 301 residues: Negative regulator of the PHO system (301 aa).

The 291-residue stretch at phenylalanine 7 to phenylalanine 297 folds into the Protein kinase domain. Residues leucine 13–valine 21 and lysine 36 each bind ATP. Aspartate 133 (proton acceptor) is an active-site residue.

The protein belongs to the protein kinase superfamily. CMGC Ser/Thr protein kinase family. CDC2/CDKX subfamily. As to quaternary structure, interacts with a number of cyclins.

It carries out the reaction L-seryl-[protein] + ATP = O-phospho-L-seryl-[protein] + ADP + H(+). It catalyses the reaction L-threonyl-[protein] + ATP = O-phospho-L-threonyl-[protein] + ADP + H(+). Functionally, when phosphate concentrations are high it phosphorylates the PHO4 transcription factor thus establishing repression. The sequence is that of Negative regulator of the PHO system (PHO85) from Eremothecium gossypii (strain ATCC 10895 / CBS 109.51 / FGSC 9923 / NRRL Y-1056) (Yeast).